Reading from the N-terminus, the 278-residue chain is Large ribosomal subunit protein uL2 (278 aa).

Residues 223-278 (GVAMNPIDHPHGGGEGRTSGGRHPVTPWGFPTKGKKTRSNKRTDTFIVSSRHNRKK) form a disordered region.

Belongs to the universal ribosomal protein uL2 family. In terms of assembly, part of the 50S ribosomal subunit. Forms a bridge to the 30S subunit in the 70S ribosome.

Its function is as follows. One of the primary rRNA binding proteins. Required for association of the 30S and 50S subunits to form the 70S ribosome, for tRNA binding and peptide bond formation. It has been suggested to have peptidyltransferase activity; this is somewhat controversial. Makes several contacts with the 16S rRNA in the 70S ribosome. In Methylobacterium nodulans (strain LMG 21967 / CNCM I-2342 / ORS 2060), this protein is Large ribosomal subunit protein uL2.